Here is a 117-residue protein sequence, read N- to C-terminus: Large ribosomal subunit protein eL34 (117 aa).

Ser-12 is modified (phosphoserine). Residues Lys-36 and Lys-43 each carry the N6-acetyllysine modification. Residue Lys-108 forms a Glycyl lysine isopeptide (Lys-Gly) (interchain with G-Cter in SUMO2) linkage.

The protein belongs to the eukaryotic ribosomal protein eL34 family. In terms of assembly, component of the large ribosomal subunit.

The protein localises to the cytoplasm. The protein resides in the cytosol. It localises to the endoplasmic reticulum. Functionally, component of the large ribosomal subunit. The ribosome is a large ribonucleoprotein complex responsible for the synthesis of proteins in the cell. The protein is Large ribosomal subunit protein eL34 (Rpl34) of Mus musculus (Mouse).